The sequence spans 100 residues: MSFGIFHRILWLFLCANTLIVYLVTGSISDAVVTTMVGSLLLQLTYFANVLFLLWRAHCARRARQTTGQFHGEEQPGDPRIAGTHGRTDGDPCFEDEDSR.

2 helical membrane-spanning segments follow: residues 9–29 (ILWL…GSIS) and 35–55 (TMVG…FLLW). The interval 66–100 (TTGQFHGEEQPGDPRIAGTHGRTDGDPCFEDEDSR) is disordered.

The protein to Rhizobium exopolysaccharide production repressor protein (ExoX).

It localises to the cell membrane. Its function is as follows. Could be involved in the inhibition of exopolysaccharide synthesis (EPS) and nodulation ability (nod). This Sinorhizobium fredii (strain NBRC 101917 / NGR234) protein is Putative exopolysaccharide production repressor protein y4xQ.